A 459-amino-acid polypeptide reads, in one-letter code: Bifunctional protein GlmU (459 aa).

A pyrophosphorylase region spans residues 1 to 230 (MSNRFAVILA…FDETLGVNDR (230 aa)). Residues 9 to 12 (LAAG), Lys23, Gln73, and 78 to 79 (GT) each bind UDP-N-acetyl-alpha-D-glucosamine. Residue Asp103 coordinates Mg(2+). 4 residues coordinate UDP-N-acetyl-alpha-D-glucosamine: Gly140, Glu155, Asn170, and Asn228. Asn228 contributes to the Mg(2+) binding site. A linker region spans residues 231–251 (VALSQAEIIMKNRINRKNMVN). Residues 252 to 459 (GVTIIDPSNT…VDQLLNKKKS (208 aa)) form an N-acetyltransferase region. UDP-N-acetyl-alpha-D-glucosamine contacts are provided by Arg333 and Lys351. His363 acts as the Proton acceptor in catalysis. Residues Tyr366 and Asn377 each coordinate UDP-N-acetyl-alpha-D-glucosamine. Residues 386–387 (NY), Ala423, and Arg440 each bind acetyl-CoA.

This sequence in the N-terminal section; belongs to the N-acetylglucosamine-1-phosphate uridyltransferase family. In the C-terminal section; belongs to the transferase hexapeptide repeat family. Homotrimer. The cofactor is Mg(2+).

The protein localises to the cytoplasm. The enzyme catalyses alpha-D-glucosamine 1-phosphate + acetyl-CoA = N-acetyl-alpha-D-glucosamine 1-phosphate + CoA + H(+). It catalyses the reaction N-acetyl-alpha-D-glucosamine 1-phosphate + UTP + H(+) = UDP-N-acetyl-alpha-D-glucosamine + diphosphate. Its pathway is nucleotide-sugar biosynthesis; UDP-N-acetyl-alpha-D-glucosamine biosynthesis; N-acetyl-alpha-D-glucosamine 1-phosphate from alpha-D-glucosamine 6-phosphate (route II): step 2/2. It participates in nucleotide-sugar biosynthesis; UDP-N-acetyl-alpha-D-glucosamine biosynthesis; UDP-N-acetyl-alpha-D-glucosamine from N-acetyl-alpha-D-glucosamine 1-phosphate: step 1/1. The protein operates within bacterial outer membrane biogenesis; LPS lipid A biosynthesis. In terms of biological role, catalyzes the last two sequential reactions in the de novo biosynthetic pathway for UDP-N-acetylglucosamine (UDP-GlcNAc). The C-terminal domain catalyzes the transfer of acetyl group from acetyl coenzyme A to glucosamine-1-phosphate (GlcN-1-P) to produce N-acetylglucosamine-1-phosphate (GlcNAc-1-P), which is converted into UDP-GlcNAc by the transfer of uridine 5-monophosphate (from uridine 5-triphosphate), a reaction catalyzed by the N-terminal domain. The protein is Bifunctional protein GlmU of Bacillus mycoides (strain KBAB4) (Bacillus weihenstephanensis).